We begin with the raw amino-acid sequence, 866 residues long: Protein SEY1 (866 aa).

Residues 1-746 (MVSNGHFAYA…KRSAIGGMTQ (746 aa)) are Cytoplasmic-facing. Positions 48–305 (GFNYHLISVF…IPADGFAVYA (258 aa)) constitute a GB1/RHD3-type G domain. Position 58–65 (58–65 (GSQSTGKS)) interacts with GTP. A coiled-coil region spans residues 480 to 506 (SNYTQELALYQKDLEKISAQLRKDEMR). A helical membrane pass occupies residues 747 to 767 (IPVYFYILLLALGWNEIIAVL). Residues 768-770 (RNP) lie on the Lumenal side of the membrane. A helical membrane pass occupies residues 771-791 (VYFFMLFLCSVAAYIIYQLNL). At 792-866 (WGPMVKMAEA…DDEVEGEETW (75 aa)) the chain is on the cytoplasmic side. Residues 840–866 (SHVRSGRNATKINERDDDDEVEGEETW) form a disordered region. Residues 854–866 (RDDDDEVEGEETW) show a composition bias toward acidic residues.

The protein belongs to the TRAFAC class dynamin-like GTPase superfamily. GB1/RHD3 GTPase family. RHD3 subfamily.

It is found in the endoplasmic reticulum membrane. In terms of biological role, cooperates with the reticulon proteins and tubule-shaping DP1 family proteins to generate and maintain the structure of the tubular endoplasmic reticulum network. Has GTPase activity, which is required for its function in ER organization. In Coccidioides immitis (strain RS) (Valley fever fungus), this protein is Protein SEY1.